The sequence spans 724 residues: Degenerin mec-10 (724 aa).

Positions 1-15 (MNRNPRMSKFQPNPR) are enriched in polar residues. A disordered region spans residues 1 to 22 (MNRNPRMSKFQPNPRSRSRFQD). The Cytoplasmic portion of the chain corresponds to 1–122 (MNRNPRMSKF…GQAPNSLYRA (122 aa)). Residues 123-143 (AWVFLLLICAIQFINQAVAVI) traverse the membrane as a helical segment. Over 144–684 (QKYQKMDKIT…FGGHLGLWSG (541 aa)) the chain is Extracellular. The segment at 229 to 265 (KRGAGEKGTFEPANSACECDEEDGSNECEERSTEKPS) is disordered. A compositionally biased stretch (acidic residues) spans 246–255 (ECDEEDGSNE). A compositionally biased stretch (basic and acidic residues) spans 256 to 265 (CEERSTEKPS). N-linked (GlcNAc...) asparagine glycans are attached at residues N293, N369, N463, N605, and N624. A helical membrane pass occupies residues 685 to 705 (VSVMTCCEFVCLAFELIYMAI). At 706–724 (AHHINQQRIRRRENAANEY) the chain is on the cytoplasmic side.

It belongs to the amiloride-sensitive sodium channel (TC 1.A.6) family. Component of a non-voltage-gated amiloride-sensitive cation channel complex (also called the degenerin channel complex) composed of at least the mec-2, mec-4, mec-6 and mec-10 subunits; the complex mediates mechanotransduction in touch cells. Interacts with mec-4 and mec-6.

It is found in the cell membrane. Its function is as follows. Subunit of an amiloride-sensitive cation channel (degenerin channel complex) permeable for sodium, potassium, lithium and N-methylglucamine, and required for mechanosensory transduction (touch sensitivity). Negatively regulates the turning step of male mating behavior. The sequence is that of Degenerin mec-10 from Caenorhabditis elegans.